Here is a 702-residue protein sequence, read N- to C-terminus: Polyribonucleotide nucleotidyltransferase 2 (702 aa).

2 residues coordinate Mg(2+): Asp483 and Asp489. The KH domain occupies 550–609; it reads PQVTKLKVHPDKVREVIGAGGKVINKIIDETGVKINIENDGTIYIAAPDQESARVALEMI. Positions 619–687 constitute an S1 motif domain; that stretch reads GEVYTGKVIK…PQGKIGLSRK (69 aa).

This sequence belongs to the polyribonucleotide nucleotidyltransferase family. Mg(2+) serves as cofactor.

The protein resides in the cytoplasm. It catalyses the reaction RNA(n+1) + phosphate = RNA(n) + a ribonucleoside 5'-diphosphate. Its function is as follows. Involved in mRNA degradation. Catalyzes the phosphorolysis of single-stranded polyribonucleotides processively in the 3'- to 5'-direction. The sequence is that of Polyribonucleotide nucleotidyltransferase 2 from Alkaliphilus metalliredigens (strain QYMF).